Reading from the N-terminus, the 437-residue chain is Sorting nexin-30 (437 aa).

Disordered regions lie at residues 1–44 and 54–73; these read MAGG…PDLL and LILP…SSSS. Threonine 38 bears the Phosphothreonine mark. Phosphoserine is present on serine 40. Residues 63–73 show a composition bias toward low complexity; sequence AGTSSPASSSS. The PX domain maps to 89-210; it reads RDLFVIVDDP…IFLTAKDLNA (122 aa). Positions 132, 134, 162, and 176 each coordinate a 1,2-diacyl-sn-glycero-3-phospho-(1D-myo-inositol-3-phosphate). The region spanning 234–437 is the BAR domain; that stretch reads KLRTRPLEFA…PLLQEKQEAK (204 aa).

The protein belongs to the sorting nexin family. Heterodimer; heterodimerizes with SNX4.

It localises to the early endosome membrane. In terms of biological role, involved in the regulation of endocytosis and in several stages of intracellular trafficking. Together with SNX4, involved in autophagosome assembly. The sequence is that of Sorting nexin-30 from Homo sapiens (Human).